The following is a 594-amino-acid chain: Glutamate decarboxylase 1 (594 aa).

The segment covering 1-13 (MASSTPSSSATSS) has biased composition (low complexity). The segment at 1–22 (MASSTPSSSATSSNAGADPNTA) is disordered. Residue S78 is modified to Phosphoserine. Residue 190 to 192 (QLS) participates in 4-aminobutanoate binding. Position 405 is an N6-(pyridoxal phosphate)lysine (K405). R567 serves as a coordination point for 4-aminobutanoate.

The protein belongs to the group II decarboxylase family. In terms of assembly, homodimer. Pyridoxal 5'-phosphate serves as cofactor.

It catalyses the reaction L-glutamate + H(+) = 4-aminobutanoate + CO2. In terms of biological role, catalyzes the synthesis of the inhibitory neurotransmitter gamma-aminobutyric acid (GABA) with pyridoxal 5'-phosphate as cofactor. This is Glutamate decarboxylase 1 (GAD1) from Canis lupus familiaris (Dog).